A 101-amino-acid polypeptide reads, in one-letter code: MRPYELMVIIDPEVEERTVEPSLQKFLNVITNDGGTIEKVDIWGRRRLAYEIKKKSEGIYAVVNFTAKPDTAKELDRQLSLNETIMRTKITRPEEQKVVAE.

It belongs to the bacterial ribosomal protein bS6 family.

Functionally, binds together with bS18 to 16S ribosomal RNA. The protein is Small ribosomal subunit protein bS6 of Arthrobacter sp. (strain FB24).